Consider the following 276-residue polypeptide: Octanoyltransferase LipM (276 aa).

The region spanning 32 to 247 (GEIDPVIRFY…GFKKGLNIEL (216 aa)) is the BPL/LPL catalytic domain. C149 functions as the Acyl-thioester intermediate in the catalytic mechanism.

It belongs to the octanoyltransferase LipM family. As to quaternary structure, monomer.

The enzyme catalyses octanoyl-[ACP] + L-lysyl-[protein] = N(6)-octanoyl-L-lysyl-[protein] + holo-[ACP] + H(+). It participates in protein modification; protein lipoylation via endogenous pathway; protein N(6)-(lipoyl)lysine from octanoyl-[acyl-carrier-protein]. In terms of biological role, catalyzes the transfer of endogenously produced octanoic acid from octanoyl-acyl-carrier-protein onto the lipoyl domain of GcvH, an intermediate carrier during protein lipoylation. The protein is Octanoyltransferase LipM of Staphylococcus aureus (strain NCTC 8325 / PS 47).